A 207-amino-acid polypeptide reads, in one-letter code: Small ribosomal subunit protein uS2 (207 aa).

The protein belongs to the universal ribosomal protein uS2 family.

The protein is Small ribosomal subunit protein uS2 of Methanocella arvoryzae (strain DSM 22066 / NBRC 105507 / MRE50).